Reading from the N-terminus, the 124-residue chain is Small ribosomal subunit protein uS12 (124 aa).

Asp-89 carries the post-translational modification 3-methylthioaspartic acid.

Belongs to the universal ribosomal protein uS12 family. In terms of assembly, part of the 30S ribosomal subunit. Contacts proteins S8 and S17. May interact with IF1 in the 30S initiation complex.

Its function is as follows. With S4 and S5 plays an important role in translational accuracy. Interacts with and stabilizes bases of the 16S rRNA that are involved in tRNA selection in the A site and with the mRNA backbone. Located at the interface of the 30S and 50S subunits, it traverses the body of the 30S subunit contacting proteins on the other side and probably holding the rRNA structure together. The combined cluster of proteins S8, S12 and S17 appears to hold together the shoulder and platform of the 30S subunit. The sequence is that of Small ribosomal subunit protein uS12 from Erwinia amylovora (Fire blight bacteria).